We begin with the raw amino-acid sequence, 269 residues long: Short-chain dehydrogenase/reductase ABA4 (269 aa).

7 residues coordinate NADP(+): I34, D80, R144, Y174, K178, I207, and T209. The active-site Proton donor is the Y174. K178 acts as the Lowers pKa of active site Tyr in catalysis.

Belongs to the short-chain dehydrogenases/reductases (SDR) family.

Its pathway is hormone biosynthesis. Short-chain dehydrogenase/reductase involved in the biosynthesis of abscisic acid (ABA), a phytohormone that acts antagonistically toward salicylic acid (SA), jasmonic acid (JA) and ethylene (ETH) signaling, to impede plant defense responses. During pathogen-host interaction, ABA plays a dual role in disease severity by increasing plant susceptibility and accelerating pathogenesis in the fungus itself. The first step of the pathway catalyzes the reaction from farnesyl diphosphate to alpha-ionylideneethane performed by the alpha-ionylideneethane synthase ABA3 via a three-step reaction mechanism involving 2 neutral intermediates, beta-farnesene and allofarnesene. The cytochrome P450 monooxygenase ABA1 might then be involved in the conversion of alpha-ionylideneethane to alpha-ionylideneacetic acid. Alpha-ionylideneacetic acid is further converted to abscisic acid in 2 steps involving the cytochrome P450 monooxygenase ABA2 and the short-chain dehydrogenase/reductase ABA4, via the intermediates 1'-deoxy-ABA or 1',4'-trans-diol-ABA, depending on the order of action of these 2 enzymes. ABA2 is responsible for the hydroxylation of carbon atom C-1' and ABA4 might be involved in the oxidation of the C-4' carbon atom. This is Short-chain dehydrogenase/reductase ABA4 (ABA4) from Pyricularia oryzae (strain Y34) (Rice blast fungus).